A 233-amino-acid polypeptide reads, in one-letter code: Ribonuclease 3 (233 aa).

Positions 9 to 136 (LQHFWEQFHL…IIGSVYLSGG (128 aa)) constitute an RNase III domain. Residue glutamate 49 coordinates Mg(2+). Aspartate 53 is an active-site residue. Mg(2+)-binding residues include aspartate 122 and glutamate 125. Glutamate 125 is a catalytic residue. A DRBM domain is found at 162–231 (DSKSALQEFV…ARAALALLKV (70 aa)).

The protein belongs to the ribonuclease III family. In terms of assembly, homodimer. Mg(2+) serves as cofactor.

The protein localises to the cytoplasm. The catalysed reaction is Endonucleolytic cleavage to 5'-phosphomonoester.. In terms of biological role, digests double-stranded RNA. Involved in the processing of primary rRNA transcript to yield the immediate precursors to the large and small rRNAs (23S and 16S). Processes some mRNAs, and tRNAs when they are encoded in the rRNA operon. Processes pre-crRNA and tracrRNA of type II CRISPR loci if present in the organism. The chain is Ribonuclease 3 from Moorella thermoacetica (strain ATCC 39073 / JCM 9320).